Here is a 360-residue protein sequence, read N- to C-terminus: UDP-D-xylose:L-fucose alpha-1,3-D-xylosyltransferase MGP4 (360 aa).

Positions Met1–Leu25 are disordered. The Cytoplasmic segment spans residues Met1 to Asn41. Low complexity predominate over residues Asn14–Leu25. A helical; Signal-anchor for type II membrane protein membrane pass occupies residues Gly42–Ser62. Residues Pro63–Glu360 lie on the Lumenal side of the membrane. 2 N-linked (GlcNAc...) asparagine glycosylation sites follow: Asn93 and Asn168. The DXD motif motif lies at Asp191–Asp193. Asn285 and Asn310 each carry an N-linked (GlcNAc...) asparagine glycan.

The protein belongs to the glycosyltransferase 77 family. It depends on Mn(2+) as a cofactor. Mg(2+) serves as cofactor. In terms of tissue distribution, widely expressed.

The protein localises to the golgi apparatus membrane. Catalyzes the transfer of D-xylose from UDP-alpha-D-xylose onto L-fucose. Probably involved in the biosynthesis of rhamnogalacturonan II (RG-II) through xylosylation of the internal fucose moiety of the A-chain of RG-II, a structurally complex pectic polysaccharide of the primary cell wall. RG-II is essential for the cell wall integrity of rapidly growing tissues such as roots and pollen tube growth and elongation. The polypeptide is UDP-D-xylose:L-fucose alpha-1,3-D-xylosyltransferase MGP4 (Arabidopsis thaliana (Mouse-ear cress)).